The primary structure comprises 429 residues: Glucose-1-phosphate adenylyltransferase (429 aa).

Alpha-D-glucose 1-phosphate-binding positions include glycine 162, 177 to 178 (EK), and serine 209.

Belongs to the bacterial/plant glucose-1-phosphate adenylyltransferase family. Homotetramer.

It carries out the reaction alpha-D-glucose 1-phosphate + ATP + H(+) = ADP-alpha-D-glucose + diphosphate. It participates in glycan biosynthesis; glycogen biosynthesis. Involved in the biosynthesis of ADP-glucose, a building block required for the elongation reactions to produce glycogen. Catalyzes the reaction between ATP and alpha-D-glucose 1-phosphate (G1P) to produce pyrophosphate and ADP-Glc. This is Glucose-1-phosphate adenylyltransferase from Picosynechococcus sp. (strain ATCC 27264 / PCC 7002 / PR-6) (Agmenellum quadruplicatum).